The following is a 256-amino-acid chain: NH(3)-dependent NAD(+) synthetase (256 aa).

Residue 29 to 36 (GISGGIDS) participates in ATP binding. A Mg(2+)-binding site is contributed by aspartate 35. Residue arginine 115 coordinates deamido-NAD(+). Threonine 135 contributes to the ATP binding site. Glutamate 140 is a binding site for Mg(2+). Residues lysine 148 and aspartate 155 each contribute to the deamido-NAD(+) site. Residues lysine 164 and serine 186 each coordinate ATP. 245–246 (HK) provides a ligand contact to deamido-NAD(+).

It belongs to the NAD synthetase family. Homodimer.

It carries out the reaction deamido-NAD(+) + NH4(+) + ATP = AMP + diphosphate + NAD(+) + H(+). The protein operates within cofactor biosynthesis; NAD(+) biosynthesis; NAD(+) from deamido-NAD(+) (ammonia route): step 1/1. Functionally, catalyzes the ATP-dependent amidation of deamido-NAD to form NAD. Uses ammonia as a nitrogen source. This Methanosarcina acetivorans (strain ATCC 35395 / DSM 2834 / JCM 12185 / C2A) protein is NH(3)-dependent NAD(+) synthetase.